A 243-amino-acid polypeptide reads, in one-letter code: Mannosyl-3-phosphoglycerate phosphatase (243 aa).

The active-site Nucleophile is the Asp8. Mg(2+)-binding residues include Asp8, Asp10, Ser169, and Asp204.

Belongs to the HAD-like hydrolase superfamily. MPGP family. Mg(2+) serves as cofactor.

The protein resides in the cytoplasm. It catalyses the reaction 2-O-(alpha-D-mannosyl)-3-phosphoglycerate + H2O = (2R)-2-O-(alpha-D-mannosyl)-glycerate + phosphate. Its pathway is carbohydrate biosynthesis; 2-(alpha-D-mannosyl)-D-glycerate biosynthesis; 2-(alpha-D-mannosyl)-D-glycerate from GDP-alpha-D-mannose (MPG route): step 2/2. Its function is as follows. Hydrolyzes mannosyl-3-phosphoglycerate (MPG) to form the osmolyte mannosylglycerate (MG). The enzyme is absolutely specific for MPG. In Pyrococcus horikoshii (strain ATCC 700860 / DSM 12428 / JCM 9974 / NBRC 100139 / OT-3), this protein is Mannosyl-3-phosphoglycerate phosphatase.